A 256-amino-acid polypeptide reads, in one-letter code: Myeloblastin (256 aa).

A signal peptide spans 1–25; it reads MAHRPPSPALASVLLALLLSGAARA. The propeptide occupies 26 to 27; sequence AE. Residues 28–248 enclose the Peptidase S1 domain; it reads IVGGHEAQPH…YVDWIRSTLR (221 aa). A disulfide bridge connects residues C56 and C72. Catalysis depends on charge relay system residues H71 and D118. N-linked (GlcNAc...) asparagine glycosylation is found at N129 and N174. Intrachain disulfides connect C152/C209, C182/C188, and C199/C224. S203 functions as the Charge relay system in the catalytic mechanism. Positions 249 to 256 are excised as a propeptide; the sequence is RVEAKGRP.

It belongs to the peptidase S1 family. Elastase subfamily. As to quaternary structure, may form dimers. Interacts with CD177; the interaction tethers PRTN3 to the cell surface; the interaction is direct. Interacts with SERPINB1. Interacts with ADGRG3. In terms of tissue distribution, expressed in polymorphonuclear leukocytes (at protein level). Expressed in neutrophils (at protein level). Expressed in differentiating neutrophils.

The protein localises to the cytoplasmic granule. Its subcellular location is the secreted. It localises to the cell membrane. It is found in the membrane raft. It catalyses the reaction Hydrolysis of proteins, including elastin, by preferential cleavage: -Ala-|-Xaa- &gt; -Val-|-Xaa-.. Inhibited by phenylmethanesulfonyl fluoride (PMSF) and diisopropyl fluorophosphate (DFP). In terms of biological role, serine protease that degrades elastin, fibronectin, laminin, vitronectin, and collagen types I, III, and IV (in vitro). By cleaving and activating receptor F2RL1/PAR-2, enhances endothelial cell barrier function and thus vascular integrity during neutrophil transendothelial migration. Plays a role in neutrophil transendothelial migration, probably when associated with CD177. Triggers inflammatory processes in neutrophils by interacting with ADGRG3 upstream of F2RL1/PAR2 activation. The protein is Myeloblastin (PRTN3) of Homo sapiens (Human).